The sequence spans 135 residues: Retinol-binding protein 5 (135 aa).

The protein belongs to the calycin superfamily. Fatty-acid binding protein (FABP) family. In terms of tissue distribution, kidney.

Its subcellular location is the cytoplasm. Intracellular transport of retinol. The protein is Retinol-binding protein 5 (RBP5) of Bos taurus (Bovine).